We begin with the raw amino-acid sequence, 347 residues long: GTPase Obg (347 aa).

The Obg domain occupies 1–158 (MFIDNVKLVL…LSVRLELKLI (158 aa)). Residues 159 to 339 (ADVGLVGFPN…LKFMLLEEVK (181 aa)) enclose the OBG-type G domain. Residues 165 to 172 (GFPNVGKS), 190 to 194 (FTTLT), 212 to 215 (DIPG), 280 to 283 (SKSD), and 320 to 322 (SSL) each bind GTP. Positions 172 and 192 each coordinate Mg(2+).

It belongs to the TRAFAC class OBG-HflX-like GTPase superfamily. OBG GTPase family. As to quaternary structure, monomer. Requires Mg(2+) as cofactor.

The protein localises to the cytoplasm. Its function is as follows. An essential GTPase which binds GTP, GDP and possibly (p)ppGpp with moderate affinity, with high nucleotide exchange rates and a fairly low GTP hydrolysis rate. Plays a role in control of the cell cycle, stress response, ribosome biogenesis and in those bacteria that undergo differentiation, in morphogenesis control. The chain is GTPase Obg from Campylobacter lari (strain RM2100 / D67 / ATCC BAA-1060).